We begin with the raw amino-acid sequence, 357 residues long: S-adenosylmethionine:tRNA ribosyltransferase-isomerase (357 aa).

It belongs to the QueA family. Monomer.

The protein localises to the cytoplasm. The enzyme catalyses 7-aminomethyl-7-carbaguanosine(34) in tRNA + S-adenosyl-L-methionine = epoxyqueuosine(34) in tRNA + adenine + L-methionine + 2 H(+). It functions in the pathway tRNA modification; tRNA-queuosine biosynthesis. Its function is as follows. Transfers and isomerizes the ribose moiety from AdoMet to the 7-aminomethyl group of 7-deazaguanine (preQ1-tRNA) to give epoxyqueuosine (oQ-tRNA). This is S-adenosylmethionine:tRNA ribosyltransferase-isomerase from Buchnera aphidicola subsp. Acyrthosiphon pisum (strain APS) (Acyrthosiphon pisum symbiotic bacterium).